The following is a 230-amino-acid chain: tRNA (cytidine-2'-O-)-methyltransferase TrmJ (230 aa).

S-adenosyl-L-methionine is bound by residues 79-81 (TSG), Gly115, Ile135, and 142-144 (PIM).

This sequence belongs to the class IV-like SAM-binding methyltransferase superfamily. RNA methyltransferase TrmH family. In terms of assembly, homodimer.

It localises to the cytoplasm. The catalysed reaction is cytidine(32) in tRNA + S-adenosyl-L-methionine = 2'-O-methylcytidine(32) in tRNA + S-adenosyl-L-homocysteine + H(+). Its function is as follows. Catalyzes the formation of 2'O-methylated cytidine (Cm32) at position 32 in tRNA. The chain is tRNA (cytidine-2'-O-)-methyltransferase TrmJ from Methanocaldococcus jannaschii (strain ATCC 43067 / DSM 2661 / JAL-1 / JCM 10045 / NBRC 100440) (Methanococcus jannaschii).